Here is a 147-residue protein sequence, read N- to C-terminus: Nucleoside diphosphate kinase (147 aa).

6 residues coordinate ATP: lysine 9, phenylalanine 57, arginine 85, threonine 91, arginine 102, and asparagine 112. Histidine 115 functions as the Pros-phosphohistidine intermediate in the catalytic mechanism.

The protein belongs to the NDK family. In terms of assembly, homotetramer. The cofactor is Mg(2+).

It is found in the cytoplasm. It carries out the reaction a 2'-deoxyribonucleoside 5'-diphosphate + ATP = a 2'-deoxyribonucleoside 5'-triphosphate + ADP. The catalysed reaction is a ribonucleoside 5'-diphosphate + ATP = a ribonucleoside 5'-triphosphate + ADP. In terms of biological role, major role in the synthesis of nucleoside triphosphates other than ATP. The ATP gamma phosphate is transferred to the NDP beta phosphate via a ping-pong mechanism, using a phosphorylated active-site intermediate. This is Nucleoside diphosphate kinase from Thermosipho melanesiensis (strain DSM 12029 / CIP 104789 / BI429).